The following is a 213-amino-acid chain: Probable GH family 25 lysozyme 4 (213 aa).

A signal peptide spans 1 to 19 (MRLFLLLITFIALFGAINA). Residues 21–213 (SGVDISQGSS…VGYDFNWYPN (193 aa)) enclose the Ch-type lysozyme domain. Residues Asp24, Asp112, and Glu114 contribute to the active site.

This sequence belongs to the glycosyl hydrolase 25 family.

It is found in the secreted. The catalysed reaction is Hydrolysis of (1-&gt;4)-beta-linkages between N-acetylmuramic acid and N-acetyl-D-glucosamine residues in a peptidoglycan and between N-acetyl-D-glucosamine residues in chitodextrins.. The sequence is that of Probable GH family 25 lysozyme 4 from Dictyostelium discoideum (Social amoeba).